We begin with the raw amino-acid sequence, 462 residues long: Retinoic acid receptor RXR-alpha (462 aa).

Residues 1–107 form a disordered region; it reads MDTKHFLPLD…MNPVSSSEDI (107 aa). The interval 1-134 is modulating; sequence MDTKHFLPLD…GNMASFTKHI (134 aa). K4 participates in a covalent cross-link: Glycyl lysine isopeptide (Lys-Gly) (interchain with G-Cter in SUMO2). The segment covering 11–24 has biased composition (polar residues); that stretch reads FSTQVNSSLTSPTG. A phosphoserine mark is found at S21 and S27. The segment covering 49–58 has biased composition (polar residues); the sequence is SPISTLSSPI. A phosphoserine; by MAPK8 and MAPK9 mark is found at S56 and S70. The span at 78 to 104 shows a compositional bias: polar residues; the sequence is SVPTTPTLGFSTGSPQLSSPMNPVSSS. T82 carries the post-translational modification Phosphothreonine; by MAPK8 and MAPK9. K108 participates in a covalent cross-link: Glycyl lysine isopeptide (Lys-Gly) (interchain with G-Cter in SUMO). S129 bears the Phosphoserine mark. C135 and C138 together coordinate Zn(2+). Residues 135 to 155 form an NR C4-type zinc finger; that stretch reads CAICGDRSSGKHYGVYSCEGC. Positions 135–200 form a DNA-binding region, nuclear receptor; it reads CAICGDRSSG…RYQKCLAMGM (66 aa). K145 carries the post-translational modification N6-acetyllysine; by EP300. Residues C152 and C155 each contribute to the Zn(2+) site. A nuclear localization signal region spans residues 160–165; the sequence is KRTVRK. Zn(2+) contacts are provided by C171, C177, C187, and C190. The NR C4-type zinc-finger motif lies at 171–195; the sequence is CRDNKDCLIDKRQRNRCQYCRYQKC. The segment at 201–224 is hinge; the sequence is KREAVQEERQRGKDRNENEVESTS. Residues 206–218 are compositionally biased toward basic and acidic residues; it reads QEERQRGKDRNEN. A disordered region spans residues 206-228; it reads QEERQRGKDRNENEVESTSSANE. The NR LBD domain occupies 227–458; the sequence is NEDMPVERIL…TFLMEMLEAP (232 aa). At S259 the chain carries Phosphoserine. A Phosphoserine; by MAPK8 and MAPK9 modification is found at S260. 2 residues coordinate 9-cis-retinoate: R316 and A327. All-trans-retinoate is bound by residues R316 and A327. Residues 348-368 form a required for nuclear export region; it reads RVLTELVSKMRDMQMDKTELG.

It belongs to the nuclear hormone receptor family. NR2 subfamily. In terms of assembly, homodimer. Heterodimer (via C-terminus) with RARA; required for ligand-dependent retinoic acid receptor transcriptional activity; association with RARA is enhanced by pulsatile shear stress. Heterodimer with PPARA (via the leucine-like zipper in the LBD); the interaction is required for PPARA transcriptional activity. Heterodimerizes with PPARG. Heterodimerizes (via NR LBD) with RARB. Heterodimerizes with NR1H4; the heterodimerization enhances the binding affinity for LXXLL motifs from coactivators. Interacts with NCOA3 and NCOA6 coactivators. Interacts with coactivator FAM120B. Interacts with coactivator PELP1, SENP6, SFPQ, DNTTIP2 and RNF8. Interacts with PRMT2. Interacts with ASXL1. Interacts with BHLHE40/DEC1, BHLHE41/DEC2, NCOR1 and NCOR2. Interacts in a ligand-dependent fashion with MED1 and NCOA1. Interacts with VDR. Interacts with EP300; the interaction is decreased by 9-cis retinoic acid. Heterodimer (via C-terminus) with NR4A1 (via DNA-binding domain); DNA-binding of the heterodimer is enhanced by 9-cis retinoic acid. NR4A1 competes with EP300 for interaction with RXRA and thereby attenuates EP300 mediated acetylation of RXRA. In the absence of hormonal ligand, interacts with TACC1. Interacts ith IGFBP3. (Microbial infection) Interacts (via the DNA binding domain) with HCV core protein; the interaction enhances the transcriptional activities of the RXRA/RARA and the RXRA/PPARA heterodimers. Post-translationally, acetylated by EP300; acetylation enhances DNA binding and transcriptional activity. Phosphorylated on serine and threonine residues mainly in the N-terminal modulating domain. Constitutively phosphorylated on Ser-21 in the presence or absence of ligand. Under stress conditions, hyperphosphorylated by activated JNK on Ser-56, Ser-70, Thr-82 and Ser-260. Phosphorylated on Ser-27, in vitro, by PKA. This phosphorylation is required for repression of cAMP-mediated transcriptional activity of RARA. In terms of processing, ubiquitinated by UBR5, leading to its degradation: UBR5 specifically recognizes and binds ligand-bound RXRA when it is not associated with coactivators (NCOAs). In presence of NCOAs, the UBR5-degron is not accessible, preventing its ubiquitination and degradation. Post-translationally, sumoylation negatively regulates transcriptional activity. Desumoylated specifically by SENP6. Expressed in lung fibroblasts (at protein level). Expressed in monocytes. Highly expressed in liver, also found in kidney and brain.

The protein localises to the nucleus. It is found in the cytoplasm. The protein resides in the mitochondrion. In terms of biological role, receptor for retinoic acid that acts as a transcription factor. Forms homo- or heterodimers with retinoic acid receptors (RARs) and binds to target response elements in response to their ligands, all-trans or 9-cis retinoic acid, to regulate gene expression in various biological processes. The RAR/RXR heterodimers bind to the retinoic acid response elements (RARE) composed of tandem 5'-AGGTCA-3' sites known as DR1-DR5 to regulate transcription. The high affinity ligand for retinoid X receptors (RXRs) is 9-cis retinoic acid. In the absence of ligand, the RXR-RAR heterodimers associate with a multiprotein complex containing transcription corepressors that induce histone deacetylation, chromatin condensation and transcriptional suppression. On ligand binding, the corepressors dissociate from the receptors and coactivators are recruited leading to transcriptional activation. Serves as a common heterodimeric partner for a number of nuclear receptors, such as RARA, RARB and PPARA. The RXRA/RARB heterodimer can act as a transcriptional repressor or transcriptional activator, depending on the RARE DNA element context. The RXRA/PPARA heterodimer is required for PPARA transcriptional activity on fatty acid oxidation genes such as ACOX1 and the P450 system genes. Together with RARA, positively regulates microRNA-10a expression, thereby inhibiting the GATA6/VCAM1 signaling response to pulsatile shear stress in vascular endothelial cells. Acts as an enhancer of RARA binding to RARE DNA element. May facilitate the nuclear import of heterodimerization partners such as VDR and NR4A1. Promotes myelin debris phagocytosis and remyelination by macrophages. Plays a role in the attenuation of the innate immune system in response to viral infections, possibly by negatively regulating the transcription of antiviral genes such as type I IFN genes. Involved in the regulation of calcium signaling by repressing ITPR2 gene expression, thereby controlling cellular senescence. The polypeptide is Retinoic acid receptor RXR-alpha (RXRA) (Homo sapiens (Human)).